The following is a 134-amino-acid chain: ATP synthase epsilon chain, chloroplastic (134 aa).

This sequence belongs to the ATPase epsilon chain family. F-type ATPases have 2 components, CF(1) - the catalytic core - and CF(0) - the membrane proton channel. CF(1) has five subunits: alpha(3), beta(3), gamma(1), delta(1), epsilon(1). CF(0) has three main subunits: a, b and c.

It localises to the plastid. The protein resides in the chloroplast thylakoid membrane. In terms of biological role, produces ATP from ADP in the presence of a proton gradient across the membrane. This chain is ATP synthase epsilon chain, chloroplastic, found in Chlorella vulgaris (Green alga).